The primary structure comprises 250 residues: Exosome complex component Rrp41 (250 aa).

Belongs to the RNase PH family. Rrp41 subfamily. As to quaternary structure, component of the archaeal exosome complex. Forms a hexameric ring-like arrangement composed of 3 Rrp41-Rrp42 heterodimers. The hexameric ring associates with a trimer of Rrp4 and/or Csl4 subunits.

Its subcellular location is the cytoplasm. In terms of biological role, catalytic component of the exosome, which is a complex involved in RNA degradation. Has 3'-&gt;5' exoribonuclease activity. Can also synthesize heteromeric RNA-tails. The chain is Exosome complex component Rrp41 from Pyrococcus furiosus (strain ATCC 43587 / DSM 3638 / JCM 8422 / Vc1).